The primary structure comprises 355 residues: 3-dehydroquinate synthase (355 aa).

NAD(+) contacts are provided by residues 105–109 (GVVGD), 129–130 (TS), K142, K151, and 169–172 (TLKT). Residues E184, H246, and H263 each contribute to the Zn(2+) site.

This sequence belongs to the sugar phosphate cyclases superfamily. Dehydroquinate synthase family. NAD(+) is required as a cofactor. Requires Co(2+) as cofactor. The cofactor is Zn(2+).

It is found in the cytoplasm. It carries out the reaction 7-phospho-2-dehydro-3-deoxy-D-arabino-heptonate = 3-dehydroquinate + phosphate. The protein operates within metabolic intermediate biosynthesis; chorismate biosynthesis; chorismate from D-erythrose 4-phosphate and phosphoenolpyruvate: step 2/7. Functionally, catalyzes the conversion of 3-deoxy-D-arabino-heptulosonate 7-phosphate (DAHP) to dehydroquinate (DHQ). The sequence is that of 3-dehydroquinate synthase from Streptococcus agalactiae serotype III (strain NEM316).